A 197-amino-acid polypeptide reads, in one-letter code: Probable NADPH:quinone oxidoreductase 1 (197 aa).

It belongs to the SsuE family. In terms of assembly, homotetramer. FMN is required as a cofactor.

It catalyses the reaction a quinone + NADH + H(+) = a quinol + NAD(+). It carries out the reaction a quinone + NADPH + H(+) = a quinol + NADP(+). The enzyme apparently serves as a quinone reductase in connection with conjugation reactions of hydroquinones involved in detoxification pathways. The sequence is that of Probable NADPH:quinone oxidoreductase 1 from Oryza sativa subsp. japonica (Rice).